The chain runs to 272 residues: 1,4-dihydroxy-2-naphthoyl-CoA synthase (272 aa).

Substrate-binding positions include arginine 33, 72–76 (SGGDQ), tyrosine 84, 116–120 (YAIGG), threonine 142, serine 148, tyrosine 245, and lysine 260. Position 141–143 (141–143 (QTG)) interacts with hydrogencarbonate. Basic and acidic residues predominate over residues 253–264 (GRDAFKEKRDPD). The interval 253–272 (GRDAFKEKRDPDFDQFPKFP) is disordered.

Belongs to the enoyl-CoA hydratase/isomerase family. MenB subfamily. Hydrogencarbonate is required as a cofactor.

The enzyme catalyses 2-succinylbenzoyl-CoA + H(+) = 1,4-dihydroxy-2-naphthoyl-CoA + H2O. The protein operates within quinol/quinone metabolism; 1,4-dihydroxy-2-naphthoate biosynthesis; 1,4-dihydroxy-2-naphthoate from chorismate: step 6/7. It functions in the pathway quinol/quinone metabolism; menaquinone biosynthesis. Its function is as follows. Converts o-succinylbenzoyl-CoA (OSB-CoA) to 1,4-dihydroxy-2-naphthoyl-CoA (DHNA-CoA). The sequence is that of 1,4-dihydroxy-2-naphthoyl-CoA synthase from Staphylococcus haemolyticus (strain JCSC1435).